A 634-amino-acid chain; its full sequence is UPF0329 protein ECU07_1850/ECU10_0050 (634 aa).

Composition is skewed to basic and acidic residues over residues 354–365 (REEREKREESKG) and 397–407 (GESKEEDRGEE). The disordered stretch occupies residues 354 to 438 (REEREKREES…KGSGEKRISE (85 aa)). Residues 408 to 417 (GGVEAEDPLE) are compositionally biased toward acidic residues.

The protein belongs to the UPF0329 family.

This chain is UPF0329 protein ECU07_1850/ECU10_0050, found in Encephalitozoon cuniculi (strain GB-M1) (Microsporidian parasite).